The chain runs to 189 residues: Protein GrpE (189 aa).

Positions 1 to 37 (MSDSSKEKKKKFADMVSRQKGDDQQSDNHKQTDDLNE) are disordered. Residues 17 to 33 (SRQKGDDQQSDNHKQTD) show a composition bias toward basic and acidic residues.

The protein belongs to the GrpE family. Homodimer.

The protein resides in the cytoplasm. In terms of biological role, participates actively in the response to hyperosmotic and heat shock by preventing the aggregation of stress-denatured proteins, in association with DnaK and GrpE. It is the nucleotide exchange factor for DnaK and may function as a thermosensor. Unfolded proteins bind initially to DnaJ; upon interaction with the DnaJ-bound protein, DnaK hydrolyzes its bound ATP, resulting in the formation of a stable complex. GrpE releases ADP from DnaK; ATP binding to DnaK triggers the release of the substrate protein, thus completing the reaction cycle. Several rounds of ATP-dependent interactions between DnaJ, DnaK and GrpE are required for fully efficient folding. The protein is Protein GrpE of Wolbachia sp. subsp. Drosophila simulans (strain wRi).